Reading from the N-terminus, the 371-residue chain is Diterpene cyclase DtcycA (371 aa).

3 residues coordinate Mg(2+): N234, S238, and E242.

Belongs to the terpene synthase family. In terms of assembly, homodimer. Mg(2+) is required as a cofactor.

The catalysed reaction is (2E,6E,10E)-geranylgeranyl diphosphate = cembrene C + diphosphate. The enzyme catalyses (2E,6E,10E)-geranylgeranyl diphosphate + H2O = (R)-nephthenol + diphosphate. Its function is as follows. Diterpene cyclases that can form multiple diterpene products. This Streptomyces sp protein is Diterpene cyclase DtcycA.